The primary structure comprises 1169 residues: Transcription-repair-coupling factor (1169 aa).

The 162-residue stretch at 634–795 (DMERERPMDR…MLGVRDLSVI (162 aa)) folds into the Helicase ATP-binding domain. 647-654 (GDVGYGKT) contacts ATP. The DEEQ box motif lies at 748–751 (DEEQ). One can recognise a Helicase C-terminal domain in the interval 809 to 970 (VLEQNSNFIK…GFKIAMRDLN (162 aa)).

It in the N-terminal section; belongs to the UvrB family. This sequence in the C-terminal section; belongs to the helicase family. RecG subfamily.

The protein localises to the cytoplasm. Its function is as follows. Couples transcription and DNA repair by recognizing RNA polymerase (RNAP) stalled at DNA lesions. Mediates ATP-dependent release of RNAP and its truncated transcript from the DNA, and recruitment of nucleotide excision repair machinery to the damaged site. The protein is Transcription-repair-coupling factor of Staphylococcus haemolyticus (strain JCSC1435).